Reading from the N-terminus, the 201-residue chain is Small ribosomal subunit protein uS4 (201 aa).

One can recognise an S4 RNA-binding domain in the interval 91 to 157 (SRLDNVVYRA…VPFQIARETA (67 aa)).

The protein belongs to the universal ribosomal protein uS4 family. As to quaternary structure, part of the 30S ribosomal subunit. Contacts protein S5. The interaction surface between S4 and S5 is involved in control of translational fidelity.

In terms of biological role, one of the primary rRNA binding proteins, it binds directly to 16S rRNA where it nucleates assembly of the body of the 30S subunit. Its function is as follows. With S5 and S12 plays an important role in translational accuracy. The sequence is that of Small ribosomal subunit protein uS4 from Mycolicibacterium paratuberculosis (strain ATCC BAA-968 / K-10) (Mycobacterium paratuberculosis).